The chain runs to 360 residues: Magnesium-protoporphyrin IX monomethyl ester [oxidative] cyclase (360 aa).

The segment at 1–21 is disordered; the sequence is MPPTAVTEATAVPGSNVTTKD.

This sequence belongs to the AcsF family. Requires Fe cation as cofactor.

It carries out the reaction Mg-protoporphyrin IX 13-monomethyl ester + 3 NADPH + 3 O2 + 2 H(+) = 3,8-divinyl protochlorophyllide a + 3 NADP(+) + 5 H2O. It functions in the pathway porphyrin-containing compound metabolism; chlorophyll biosynthesis (light-independent). Functionally, catalyzes the formation of the isocyclic ring in chlorophyll biosynthesis. Mediates the cyclase reaction, which results in the formation of divinylprotochlorophyllide (Pchlide) characteristic of all chlorophylls from magnesium-protoporphyrin IX 13-monomethyl ester (MgPMME). The protein is Magnesium-protoporphyrin IX monomethyl ester [oxidative] cyclase of Synechococcus sp. (strain CC9311).